Reading from the N-terminus, the 290-residue chain is Translin-associated protein X (290 aa).

The tract at residues 1–32 (MSNKEGSGGFRKRKHDNFPHNQRREGKDVNSS) is disordered. Basic and acidic residues predominate over residues 16 to 28 (DNFPHNQRREGKD). An interaction with C1D region spans residues 73 to 208 (LLHRITSAPD…MRMCINSVGN (136 aa)). Residues E129 and E197 each coordinate Mg(2+). Residue K279 forms a Glycyl lysine isopeptide (Lys-Gly) (interchain with G-Cter in SUMO2) linkage.

It belongs to the translin family. In terms of assembly, ring-shaped heterooctamer of six TSN and two TSNAX subunits. Interacts with GOLGA3, TSNAXIP1, SUN1 and AKAP9. Interacts with the homodimeric form of C1D following gamma-radiation. Interacts with TSN and C1D in a mutually exclusive manner. Post-translationally, sumoylated with SUMO1.

Its subcellular location is the cytoplasm. It localises to the perinuclear region. It is found in the golgi apparatus. The protein resides in the nucleus. Its function is as follows. Acts in combination with TSN as an endonuclease involved in the activation of the RNA-induced silencing complex (RISC). Possible role in spermatogenesis. The polypeptide is Translin-associated protein X (TSNAX) (Pongo abelii (Sumatran orangutan)).